The chain runs to 545 residues: MYCAKLILLLGCFWISSSASDPADPLLVDLPNGKLRGRDNGNYYSYESLPYAEPPVGDLRFEAPQPYKQQWTDTFDATQPPVSCMQWDQFIRGDDKLAGNEDCLTVSVYRPKNSSRNSFPVVAQIHGGAFMFGGASQNGHENFMREGNLILVKISYRLGPLGFVSTGDADLSGNFGLKDQRLALLWIKQNIASFGGEPENILVIGHSAGGGSVHLQVLREDFSKVAKAAISFSGNALDPWVVQQGGRGRAFELGRIVGCGQASDSVTLKKCLKSKPASEIVSAVRNFLVFAYVPFTPFGPVVESPDAPEAFISQHPVDIIKSGKFAQVPWAVTYTTEDGGYNAALLLEEQASSGREWIVDLNDRWFDWAPYLLFYRDSMTTIKDMDDYSRKLRQEYLGDRRFSVESYWDLQRLFTDVLFKNSTEISLDLHRKHGKSPVYAFVYDNPANTGIGQGLAQRTDINFGTVHGDDYFLIFENIVREPQLRSDEETISRNFLKMLNDFVLSENGTLAFGTCVFQDNVGSSKLQLLSITRNGCENLELESFP.

Positions 1 to 19 are cleaved as a signal peptide; the sequence is MYCAKLILLLGCFWISSSA. A disulfide bridge links Cys84 with Cys103. Asn113 carries N-linked (GlcNAc...) asparagine glycosylation. The active-site Acyl-ester intermediate is the Ser207. Cys259 and Cys271 are joined by a disulfide. N-linked (GlcNAc...) asparagine glycosylation occurs at Asn421. His467 serves as the catalytic Charge relay system. Residue Asn507 is glycosylated (N-linked (GlcNAc...) asparagine). Residues Cys515 and Cys536 are joined by a disulfide bond.

The protein belongs to the type-B carboxylesterase/lipase family. As to quaternary structure, homodimer.

Its subcellular location is the secreted. The catalysed reaction is a carboxylic ester + H2O = an alcohol + a carboxylate + H(+). This Drosophila persimilis (Fruit fly) protein is Esterase-5B (Est-5B).